Reading from the N-terminus, the 218-residue chain is Adenylate kinase (218 aa).

10 to 15 (GVGKGT) lines the ATP pocket. The segment at 30–59 (STGDMLRSAIKQGTELGLKAKSFIDKGELV) is NMP. AMP contacts are provided by residues T31, R36, 57–59 (ELV), 86–89 (GFPR), and Q93. The tract at residues 127–164 (GRRIAPSTGKVYHVVYNPPKVEGKCDETGEDLIIREDD) is LID. Residues R128 and 137–138 (VY) each bind ATP. Positions 161 and 172 each coordinate AMP. Residue Q200 coordinates ATP.

It belongs to the adenylate kinase family. In terms of assembly, monomer.

The protein resides in the cytoplasm. It carries out the reaction AMP + ATP = 2 ADP. It functions in the pathway purine metabolism; AMP biosynthesis via salvage pathway; AMP from ADP: step 1/1. Catalyzes the reversible transfer of the terminal phosphate group between ATP and AMP. Plays an important role in cellular energy homeostasis and in adenine nucleotide metabolism. This Chloroherpeton thalassium (strain ATCC 35110 / GB-78) protein is Adenylate kinase.